A 546-amino-acid chain; its full sequence is Tryptophan biosynthesis protein TrpCD (546 aa).

The indole-3-glycerol phosphate synthase stretch occupies residues 1–226 (MMDFGFVDSL…FVQTVCGGEK (226 aa)). The anthranilate phosphoribosyltransferase stretch occupies residues 227-546 (MIEDVLRGLD…EEIACKSTSM (320 aa)). 5-phospho-alpha-D-ribose 1-diphosphate is bound by residues glycine 295, 298–299 (GD), serine 303, 305–308 (NVST), 322–330 (KHGNRAVSS), and serine 334. Residue glycine 295 participates in anthranilate binding. Serine 307 provides a ligand contact to Mg(2+). Residue asparagine 325 participates in anthranilate binding. Anthranilate is bound at residue arginine 380. Mg(2+) is bound by residues aspartate 437 and glutamate 438.

It in the N-terminal section; belongs to the TrpC family. In the C-terminal section; belongs to the anthranilate phosphoribosyltransferase family. Mg(2+) is required as a cofactor.

The catalysed reaction is 1-(2-carboxyphenylamino)-1-deoxy-D-ribulose 5-phosphate + H(+) = (1S,2R)-1-C-(indol-3-yl)glycerol 3-phosphate + CO2 + H2O. The enzyme catalyses N-(5-phospho-beta-D-ribosyl)anthranilate + diphosphate = 5-phospho-alpha-D-ribose 1-diphosphate + anthranilate. Its pathway is amino-acid biosynthesis; L-tryptophan biosynthesis; L-tryptophan from chorismate: step 2/5. It participates in amino-acid biosynthesis; L-tryptophan biosynthesis; L-tryptophan from chorismate: step 4/5. Its function is as follows. Bifunctional enzyme that catalyzes the second and fourth steps of tryptophan biosynthetic pathway. The second step is catalyzed by the anthranilate phosphoribosyltransferase, coded by the TrpD domain and the fourth step is catalyzed by indole-3-glycerol phosphate synthase, coded by the TrpC domain. The chain is Tryptophan biosynthesis protein TrpCD (trpCD) from Archaeoglobus fulgidus (strain ATCC 49558 / DSM 4304 / JCM 9628 / NBRC 100126 / VC-16).